A 361-amino-acid chain; its full sequence is BBSome complex member bbs-5 (361 aa).

This sequence belongs to the BBS5 family. Part of BBSome complex, that contains at least bbs-1, bbs-2, bbs-4, bbs-5, osm-12, bbs-8/ttc-8 and bbs-9. Interacts with bbs-4 (via C-terminus); the interaction is direct.

It localises to the cell projection. The protein localises to the cilium membrane. The protein resides in the cytoplasm. Its subcellular location is the cytoskeleton. It is found in the cilium basal body. It localises to the microtubule organizing center. The protein localises to the centrosome. The protein resides in the centriolar satellite. Component of the BBSome complex. The BBSome complex is thought to function as a coat complex required for sorting of specific membrane proteins to the primary cilia. The BBSome complex is required for ciliogenesis but is dispensable for centriolar satellite function. Required for BBSome complex ciliary localization but not for the proper complex assembly. Required, redundantly with bbs-4, for cilia biogenesis and both the assembly and movement of intraflagellar transport proteins along the ciliary axoneme. Plays a role in the removal of degraded mechanosensory receptors within the cilia. This chain is BBSome complex member bbs-5, found in Caenorhabditis elegans.